A 505-amino-acid chain; its full sequence is 4-alpha-glucanotransferase (505 aa).

This sequence belongs to the disproportionating enzyme family.

It is found in the cytoplasm. It catalyses the reaction Transfers a segment of a (1-&gt;4)-alpha-D-glucan to a new position in an acceptor, which may be glucose or a (1-&gt;4)-alpha-D-glucan.. The chain is 4-alpha-glucanotransferase (malQ) from Synechocystis sp. (strain ATCC 27184 / PCC 6803 / Kazusa).